Consider the following 1153-residue polypeptide: Error-prone DNA polymerase (1153 aa).

2 disordered regions span residues 1–39 (MFYS…QAQP) and 64–89 (VGEG…GASQ).

It belongs to the DNA polymerase type-C family. DnaE2 subfamily.

It is found in the cytoplasm. It catalyses the reaction DNA(n) + a 2'-deoxyribonucleoside 5'-triphosphate = DNA(n+1) + diphosphate. In terms of biological role, DNA polymerase involved in damage-induced mutagenesis and translesion synthesis (TLS). It is not the major replicative DNA polymerase. The protein is Error-prone DNA polymerase of Corynebacterium jeikeium (strain K411).